A 107-amino-acid polypeptide reads, in one-letter code: Integration host factor subunit alpha (107 aa).

Belongs to the bacterial histone-like protein family. In terms of assembly, heterodimer of an alpha and a beta chain.

In terms of biological role, this protein is one of the two subunits of integration host factor, a specific DNA-binding protein that functions in genetic recombination as well as in transcriptional and translational control. This chain is Integration host factor subunit alpha, found in Brucella anthropi (strain ATCC 49188 / DSM 6882 / CCUG 24695 / JCM 21032 / LMG 3331 / NBRC 15819 / NCTC 12168 / Alc 37) (Ochrobactrum anthropi).